A 79-amino-acid chain; its full sequence is MAGGRRGGRAKRRKVCYFTSNGITHIDYKDVDLLRKFVSERGKILPRRVTGTNAKYQRKLTIAIKRARQMALLPYVTGE.

The protein belongs to the bacterial ribosomal protein bS18 family. In terms of assembly, part of the 30S ribosomal subunit. Forms a tight heterodimer with protein bS6.

Functionally, binds as a heterodimer with protein bS6 to the central domain of the 16S rRNA, where it helps stabilize the platform of the 30S subunit. The polypeptide is Small ribosomal subunit protein bS18 (Bacillus velezensis (strain DSM 23117 / BGSC 10A6 / LMG 26770 / FZB42) (Bacillus amyloliquefaciens subsp. plantarum)).